Consider the following 886-residue polypeptide: Alanine--tRNA ligase (886 aa).

H570, H574, C672, and H676 together coordinate Zn(2+).

It belongs to the class-II aminoacyl-tRNA synthetase family. Zn(2+) serves as cofactor.

It localises to the cytoplasm. The catalysed reaction is tRNA(Ala) + L-alanine + ATP = L-alanyl-tRNA(Ala) + AMP + diphosphate. Functionally, catalyzes the attachment of alanine to tRNA(Ala) in a two-step reaction: alanine is first activated by ATP to form Ala-AMP and then transferred to the acceptor end of tRNA(Ala). Also edits incorrectly charged Ser-tRNA(Ala) and Gly-tRNA(Ala) via its editing domain. The chain is Alanine--tRNA ligase from Acidothermus cellulolyticus (strain ATCC 43068 / DSM 8971 / 11B).